Consider the following 141-residue polypeptide: Large-conductance mechanosensitive channel (141 aa).

Helical transmembrane passes span 21–41 (VGVI…GDLI) and 85–105 (GSFL…FMMV).

The protein belongs to the MscL family. In terms of assembly, homopentamer.

The protein localises to the cell inner membrane. Functionally, channel that opens in response to stretch forces in the membrane lipid bilayer. May participate in the regulation of osmotic pressure changes within the cell. This chain is Large-conductance mechanosensitive channel, found in Dechloromonas aromatica (strain RCB).